We begin with the raw amino-acid sequence, 367 residues long: Pentatricopeptide repeat-containing protein At1g11900 (367 aa).

PPR repeat units follow at residues 69–103, 104–139, 141–175, 176–210, 211–241, 247–281, 282–316, and 317–347; these read SKIDYTNLVEKFTRDGNLSGAYDLLQSLQEKNICL, PISVFKNLLAAAGELNDMKLSCRVFREVLILPGKEP, SSDCYLNLARAFINTDDCTYLTSLLKEISESSLPY, RLIVMNRIIFAFAETRQIDKVLMILKEMKEWECKP, DVITYNSVLDILGRAGLVNEILGVLSTMKED, NIITYNTVLNGMRKACRFDMCLVIYNEMVQCGIEP, DLLSYTAVIDSLGRSGNVKESLRLFDEMKQRQIRP, and SVYVYRALIDCLKKSGDFQSALQLSDELKNT.

It belongs to the PPR family. P subfamily.

The protein is Pentatricopeptide repeat-containing protein At1g11900 of Arabidopsis thaliana (Mouse-ear cress).